A 309-amino-acid polypeptide reads, in one-letter code: tRNA pseudouridine synthase B (309 aa).

D39 (nucleophile) is an active-site residue. In terms of domain architecture, PUA spans 229 to 306 (LPRVVVHQES…ERVLTLRKVF (78 aa)).

Belongs to the pseudouridine synthase TruB family. Type 1 subfamily.

The catalysed reaction is uridine(55) in tRNA = pseudouridine(55) in tRNA. Responsible for synthesis of pseudouridine from uracil-55 in the psi GC loop of transfer RNAs. This chain is tRNA pseudouridine synthase B, found in Thermotoga petrophila (strain ATCC BAA-488 / DSM 13995 / JCM 10881 / RKU-1).